Here is a 62-residue protein sequence, read N- to C-terminus: Alpha-conotoxin Vt1.27 (62 aa).

The first 21 residues, 1–21, serve as a signal peptide directing secretion; that stretch reads MGMRMMFTVFLLVVLATTVVS. The propeptide occupies 22–40; the sequence is FTLDRASDGASAAADLVAR. Intrachain disulfides connect cysteine 46–cysteine 52 and cysteine 47–cysteine 61.

Belongs to the conotoxin A superfamily. Expressed by the venom duct.

It is found in the secreted. Its function is as follows. The short (45-61) amidated synthetic peptide inhibits the rat neuronal alpha-3-beta-2/CHRNA3-CHRNB2 nicotinic acetylcholine receptor (nAChR) (IC(50)=1.16 uM). It also inhibits Cav2.2/CACNA1C voltage-gated calcium channel (IC(50)=398 nM). In vivo, when tested in rat pain models, this short amidated peptide increases the pain threshold. This Conus planorbis (Planorbis cone) protein is Alpha-conotoxin Vt1.27.